We begin with the raw amino-acid sequence, 461 residues long: Photosystem II CP43 reaction center protein (461 aa).

A propeptide spanning residues 1–2 (ME) is cleaved from the precursor. Position 3 is an N-acetylthreonine (T3). T3 carries the phosphothreonine modification. Helical transmembrane passes span 57–81 (LFEV…PHIA), 122–143 (LIGP…KDKN), 166–188 (KAMY…RIIS), 243–263 (KPWG…LSYS), and 279–300 (WFNN…ASQA). E355 is a [CaMn4O5] cluster binding site. The chain crosses the membrane as a helical span at residues 435-459 (RARAAAAGFEKGIDRDTEPVLSMKP).

The protein belongs to the PsbB/PsbC family. PsbC subfamily. As to quaternary structure, PSII is composed of 1 copy each of membrane proteins PsbA, PsbB, PsbC, PsbD, PsbE, PsbF, PsbH, PsbI, PsbJ, PsbK, PsbL, PsbM, PsbT, PsbX, PsbY, PsbZ, Psb30/Ycf12, at least 3 peripheral proteins of the oxygen-evolving complex and a large number of cofactors. It forms dimeric complexes. Binds multiple chlorophylls and provides some of the ligands for the Ca-4Mn-5O cluster of the oxygen-evolving complex. It may also provide a ligand for a Cl- that is required for oxygen evolution. PSII binds additional chlorophylls, carotenoids and specific lipids. serves as cofactor.

It localises to the plastid. It is found in the chloroplast thylakoid membrane. Functionally, one of the components of the core complex of photosystem II (PSII). It binds chlorophyll and helps catalyze the primary light-induced photochemical processes of PSII. PSII is a light-driven water:plastoquinone oxidoreductase, using light energy to abstract electrons from H(2)O, generating O(2) and a proton gradient subsequently used for ATP formation. The chain is Photosystem II CP43 reaction center protein from Oltmannsiellopsis viridis (Marine flagellate).